Reading from the N-terminus, the 789-residue chain is Cell pattern formation-associated protein stuA (789 aa).

2 disordered regions span residues 50-131 (PALS…NTVG) and 205-224 (PGGV…SVSS). 3 stretches are compositionally biased toward polar residues: residues 55-69 (PTAS…SYRT), 76-88 (ASHN…SLSG), and 115-131 (LDSS…NTVG). One can recognise an HTH APSES-type domain in the interval 272–378 (RVTATLWEDE…HNIGGLLYHP (107 aa)). The H-T-H motif DNA-binding region spans 306-327 (GTKLLNVAGMTRGRRDGILKSE). Disordered stretches follow at residues 389-459 (QESQ…ASSL), 487-543 (SIDT…YAPQ), and 616-789 (HDSA…ARRR). Composition is skewed to polar residues over residues 419 to 438 (LQTP…SQSA), 487 to 529 (SIDT…SKSY), 620 to 636 (GYNT…NPSV), 645 to 667 (QLAS…TPRT), and 676 to 713 (SGYN…SVAS). The interval 731–758 (KRMREDDDVDQIVRPDSRGAEYESKRRK) is nuclear localization domain. Positions 741–754 (QIVRPDSRGAEYES) are enriched in basic and acidic residues.

It belongs to the EFG1/PHD1/stuA family.

It is found in the nucleus. Functionally, transcription factor that regulates asexual reproduction. Binds the StuA-response elements (StRE) with the consensus sequence 5'-(A/T)CGCG(T/A)N(A/C)-3' at the promoters of target genes. In Aspergillus flavus (strain ATCC 200026 / FGSC A1120 / IAM 13836 / NRRL 3357 / JCM 12722 / SRRC 167), this protein is Cell pattern formation-associated protein stuA.